The primary structure comprises 82 residues: Sec-independent protein translocase protein TatA (82 aa).

A helical transmembrane segment spans residues M1–T21.

This sequence belongs to the TatA/E family. In terms of assembly, the Tat system comprises two distinct complexes: a TatABC complex, containing multiple copies of TatA, TatB and TatC subunits, and a separate TatA complex, containing only TatA subunits. Substrates initially bind to the TatABC complex, which probably triggers association of the separate TatA complex to form the active translocon.

Its subcellular location is the cell inner membrane. Part of the twin-arginine translocation (Tat) system that transports large folded proteins containing a characteristic twin-arginine motif in their signal peptide across membranes. TatA could form the protein-conducting channel of the Tat system. The chain is Sec-independent protein translocase protein TatA from Leptothrix cholodnii (strain ATCC 51168 / LMG 8142 / SP-6) (Leptothrix discophora (strain SP-6)).